The primary structure comprises 259 residues: Factor V activator (259 aa).

The signal sequence occupies residues 1–18 (MVLIRVLANLLVLQLSYA). Residues 19–24 (QKSSEL) constitute a propeptide that is removed on maturation. A Peptidase S1 domain is found at 25 to 251 (VVGGDECDIN…YTDWIQSIIA (227 aa)). Disulfide bonds link C31/C165, C52/C68, C100/C258, C144/C212, C176/C191, and C202/C227. Residues H67 and D112 each act as charge relay system in the active site. Residue S206 is the Charge relay system of the active site. N253 carries an N-linked (GlcNAc...) asparagine glycan.

It belongs to the peptidase S1 family. Snake venom subfamily. In terms of assembly, monomer. N-glycosylated. Contains 4.4% of hexoses, 4.4% of hexosamines and 3.1% of sialic acids. Expressed by the venom gland.

The protein localises to the secreted. The catalysed reaction is Fully activates human clotting factor V by a single cleavage at the 1545-Trp-Tyr-Leu-Arg-|-Ser-Asn-Asn-Gly-1552 bond. Cattle, but not rabbit, factor V is cleaved, and no other proteins of the clotting system are attacked. Esterase activity is observed on Bz-Arg-OEt and Tos-Arg-OMe, and amidase activity on Phe-pipecolyl-Arg-NHPhNO2.. Inhibited by D-Phe-Pro-Arg-chloromethyl ketone (FPRCK) (98%), PMSF (93%), benzamidine (67%), and diisopropylfluorophosphate (DFP). Is not inhibited by BPTI, antithrombin and EDTA. Venom serine protease that converts factor V (F5) to the active form Va in the presence of calcium ions and phospholipids. It cleaves the Arg(1545)-Ser(1546) linkage in the human factor V molecule. Has hydrolytic activities against BAEE (1.2 U/mg), TAME, and Pro-Phe-Arg-MCA (4.9 U/mg). Shows coagulant activity. This Macrovipera lebetinus (Levantine viper) protein is Factor V activator.